A 127-amino-acid polypeptide reads, in one-letter code: Large ribosomal subunit protein bL19 (127 aa).

Belongs to the bacterial ribosomal protein bL19 family.

Its function is as follows. This protein is located at the 30S-50S ribosomal subunit interface and may play a role in the structure and function of the aminoacyl-tRNA binding site. The chain is Large ribosomal subunit protein bL19 from Paraburkholderia phymatum (strain DSM 17167 / CIP 108236 / LMG 21445 / STM815) (Burkholderia phymatum).